The chain runs to 335 residues: Tetraacyldisaccharide 4'-kinase (335 aa).

ATP is bound at residue 58–65 (TVGGSGKT).

It belongs to the LpxK family.

The enzyme catalyses a lipid A disaccharide + ATP = a lipid IVA + ADP + H(+). Its pathway is glycolipid biosynthesis; lipid IV(A) biosynthesis; lipid IV(A) from (3R)-3-hydroxytetradecanoyl-[acyl-carrier-protein] and UDP-N-acetyl-alpha-D-glucosamine: step 6/6. Functionally, transfers the gamma-phosphate of ATP to the 4'-position of a tetraacyldisaccharide 1-phosphate intermediate (termed DS-1-P) to form tetraacyldisaccharide 1,4'-bis-phosphate (lipid IVA). In Shewanella sp. (strain MR-4), this protein is Tetraacyldisaccharide 4'-kinase.